Here is a 675-residue protein sequence, read N- to C-terminus: Heat shock 70 kDa protein, mitochondrial (675 aa).

Residues 1–52 (MAATLLRSLQRRNLSSSSVSAFRSLTGSTKTSYATHKLASLTRPFSSRPAGN) constitute a mitochondrion transit peptide. Residues 639-675 (VSKIGQHMSGGSSGGPSEGGSQGGEQAPEAEYEEVKK) form a disordered region. Over residues 649 to 661 (GSSGGPSEGGSQG) the composition is skewed to gly residues. A compositionally biased stretch (acidic residues) spans 666–675 (PEAEYEEVKK).

This sequence belongs to the heat shock protein 70 family.

The protein resides in the mitochondrion. The sequence is that of Heat shock 70 kDa protein, mitochondrial (HSP1) from Pisum sativum (Garden pea).